Consider the following 34-residue polypeptide: Beta-theraphotoxin-Pmu1a (34 aa).

3 disulfides stabilise this stretch: C3–C18, C10–C23, and C17–C30. L34 bears the Leucine amide mark.

Belongs to the neurotoxin 10 (Hwtx-1) family. 34 (Jztx-26) subfamily. As to expression, expressed by the venom gland.

It is found in the secreted. Functionally, spider venom neurotoxin that blocks voltage-gated sodium channels Nav1.3/SCN3A and Nav1.8/SCN10A in human (IC(50)=2 uM and IC(50)=4 uM, respectively) and rat (IC(50)=2 uM and IC(50)=2.5 uM, respectively). This is Beta-theraphotoxin-Pmu1a from Pterinochilus murinus (Mombasa golden starburst baboon spider).